The following is a 560-amino-acid chain: DNA ligase B (560 aa).

Catalysis depends on lysine 128, which acts as the N6-AMP-lysine intermediate.

This sequence belongs to the NAD-dependent DNA ligase family. LigB subfamily.

The enzyme catalyses NAD(+) + (deoxyribonucleotide)n-3'-hydroxyl + 5'-phospho-(deoxyribonucleotide)m = (deoxyribonucleotide)n+m + AMP + beta-nicotinamide D-nucleotide.. Catalyzes the formation of phosphodiester linkages between 5'-phosphoryl and 3'-hydroxyl groups in double-stranded DNA using NAD as a coenzyme and as the energy source for the reaction. The protein is DNA ligase B of Azotobacter vinelandii (strain DJ / ATCC BAA-1303).